We begin with the raw amino-acid sequence, 398 residues long: cAMP-dependent protein kinase type 3 (398 aa).

2 positions are modified to phosphoserine: Ser-15 and Ser-55. Residues 88–342 (FQILRTLGTG…SEDVKNHPWF (255 aa)) form the Protein kinase domain. ATP-binding positions include 94–102 (LGTGSFGRV) and Lys-117. The active-site Proton acceptor is Asp-211. An AGC-kinase C-terminal domain is found at 343 to 398 (NEVIWEKLLARYIETPYEPPIQQGQGDTSQFDRYPEEEFNYGIQGEDPYMDLMKEF).

The protein belongs to the protein kinase superfamily. AGC Ser/Thr protein kinase family. cAMP subfamily.

The enzyme catalyses L-seryl-[protein] + ATP = O-phospho-L-seryl-[protein] + ADP + H(+). It catalyses the reaction L-threonyl-[protein] + ATP = O-phospho-L-threonyl-[protein] + ADP + H(+). Its activity is regulated as follows. Activated by cAMP. The chain is cAMP-dependent protein kinase type 3 (TPK3) from Saccharomyces cerevisiae (strain ATCC 204508 / S288c) (Baker's yeast).